The sequence spans 120 residues: Large ribosomal subunit protein uL18 (120 aa).

Belongs to the universal ribosomal protein uL18 family. Part of the 50S ribosomal subunit; part of the 5S rRNA/L5/L18/L25 subcomplex. Contacts the 5S and 23S rRNAs.

This is one of the proteins that bind and probably mediate the attachment of the 5S RNA into the large ribosomal subunit, where it forms part of the central protuberance. This is Large ribosomal subunit protein uL18 from Rhodopseudomonas palustris (strain BisA53).